The following is a 232-amino-acid chain: MDAVAAEPVVAPVLPLPAQVRDLGMQDYAPVWRAMQRFTDTRDEHTGDELWVVEHTPVFTLGQAGKPEHVLAPGEIPVLQVDRGGQVTYHGPGQLVVYPLLDLRRLKIGVRDYVCKIEQALIDTLDEWNIVAERRDGAPGVYVGGAKIAALGIRVRRGCTFHGLSFNVAMDLEPFHRINPCGYQDLQVTSVLDLGGPSGMDAVKAVLLDQLARQFGLVLQPTSALPDLSLPA.

Positions 44 to 219 (EHTGDELWVV…QLARQFGLVL (176 aa)) constitute a BPL/LPL catalytic domain. Substrate contacts are provided by residues 83-90 (RGGQVTYH), 150-152 (ALG), and 163-165 (GLS). Cysteine 181 serves as the catalytic Acyl-thioester intermediate.

This sequence belongs to the LipB family.

Its subcellular location is the cytoplasm. It catalyses the reaction octanoyl-[ACP] + L-lysyl-[protein] = N(6)-octanoyl-L-lysyl-[protein] + holo-[ACP] + H(+). Its pathway is protein modification; protein lipoylation via endogenous pathway; protein N(6)-(lipoyl)lysine from octanoyl-[acyl-carrier-protein]: step 1/2. Catalyzes the transfer of endogenously produced octanoic acid from octanoyl-acyl-carrier-protein onto the lipoyl domains of lipoate-dependent enzymes. Lipoyl-ACP can also act as a substrate although octanoyl-ACP is likely to be the physiological substrate. The sequence is that of Octanoyltransferase from Xanthomonas campestris pv. campestris (strain 8004).